Reading from the N-terminus, the 215-residue chain is NAD(P)H-hydrate epimerase (215 aa).

The 203-residue stretch at 10–212 (SRELDDKTIN…DIGIYRGNAF (203 aa)) folds into the YjeF N-terminal domain. Residue 59–63 (NNGGD) participates in (6S)-NADPHX binding. Residues asparagine 60 and aspartate 122 each coordinate K(+). (6S)-NADPHX-binding positions include 126–132 (GSGLSRN) and aspartate 155. Serine 158 is a K(+) binding site.

It belongs to the NnrE/AIBP family. Requires K(+) as cofactor.

The catalysed reaction is (6R)-NADHX = (6S)-NADHX. It catalyses the reaction (6R)-NADPHX = (6S)-NADPHX. Catalyzes the epimerization of the S- and R-forms of NAD(P)HX, a damaged form of NAD(P)H that is a result of enzymatic or heat-dependent hydration. This is a prerequisite for the S-specific NAD(P)H-hydrate dehydratase to allow the repair of both epimers of NAD(P)HX. This chain is NAD(P)H-hydrate epimerase, found in Lentilactobacillus buchneri (strain NRRL B-30929) (Lactobacillus buchneri).